The chain runs to 92 residues: Pyrimidine/purine nucleoside phosphorylase (92 aa).

It belongs to the nucleoside phosphorylase PpnP family.

The enzyme catalyses a purine D-ribonucleoside + phosphate = a purine nucleobase + alpha-D-ribose 1-phosphate. It carries out the reaction adenosine + phosphate = alpha-D-ribose 1-phosphate + adenine. It catalyses the reaction cytidine + phosphate = cytosine + alpha-D-ribose 1-phosphate. The catalysed reaction is guanosine + phosphate = alpha-D-ribose 1-phosphate + guanine. The enzyme catalyses inosine + phosphate = alpha-D-ribose 1-phosphate + hypoxanthine. It carries out the reaction thymidine + phosphate = 2-deoxy-alpha-D-ribose 1-phosphate + thymine. It catalyses the reaction uridine + phosphate = alpha-D-ribose 1-phosphate + uracil. The catalysed reaction is xanthosine + phosphate = alpha-D-ribose 1-phosphate + xanthine. Its function is as follows. Catalyzes the phosphorolysis of diverse nucleosides, yielding D-ribose 1-phosphate and the respective free bases. Can use uridine, adenosine, guanosine, cytidine, thymidine, inosine and xanthosine as substrates. Also catalyzes the reverse reactions. The polypeptide is Pyrimidine/purine nucleoside phosphorylase (Rhodopirellula baltica (strain DSM 10527 / NCIMB 13988 / SH1)).